Reading from the N-terminus, the 221-residue chain is Large ribosomal subunit protein uL4 (221 aa).

Residues 45–100 (ARQGTHKTKNRGEVSGAGRKPFKQKGTGRARQGSIRAPQMTGGGIVHGPTPRDYSQ) form a disordered region.

The protein belongs to the universal ribosomal protein uL4 family. As to quaternary structure, part of the 50S ribosomal subunit.

In terms of biological role, one of the primary rRNA binding proteins, this protein initially binds near the 5'-end of the 23S rRNA. It is important during the early stages of 50S assembly. It makes multiple contacts with different domains of the 23S rRNA in the assembled 50S subunit and ribosome. Functionally, forms part of the polypeptide exit tunnel. The protein is Large ribosomal subunit protein uL4 of Leifsonia xyli subsp. xyli (strain CTCB07).